We begin with the raw amino-acid sequence, 1040 residues long: Contactin-2 (1040 aa).

An N-terminal signal peptide occupies residues 1–30 (MGAPARKRASLLLLLLATMALVSSPGWSFS). 6 consecutive Ig-like C2-type domains span residues 39-130 (PVFE…AVLR), 135-224 (QEFS…SVFS), 241-324 (PSIK…GRII), 329-413 (PEWL…AELA), 419-506 (PDFR…GILS), and 511-605 (TKIT…ATVL). Disulfide bonds link C63-C113, C157-C209, C263-C308, and C350-C397. N-linked (GlcNAc...) asparagine glycans are attached at residues N78, N200, and N206. 4 N-linked (GlcNAc...) asparagine glycosylation sites follow: N463, N479, N500, and N527. 4 consecutive Fibronectin type-III domains span residues 612–710 (PPGG…TKEA), 715–812 (APSG…SAEE), 817–913 (APAK…MKPP), and 917–1008 (PPGN…NGGT). N777 is a glycosylation site (N-linked (GlcNAc...) asparagine). A Cell attachment site motif is present at residues 796–798 (RGD). 3 N-linked (GlcNAc...) asparagine glycosylation sites follow: N832, N920, and N942. Residues 897–922 (GTGPASPSADAMTMKPPPRRPPGNIS) form a disordered region. S1014 carries the GPI-anchor amidated serine lipid modification. Positions 1015-1040 (SAVRPAHPGPVFSCMVILMLAGCQRL) are cleaved as a propeptide — removed in mature form.

Belongs to the immunoglobulin superfamily. Contactin family.

The protein localises to the cell membrane. Functionally, in conjunction with another transmembrane protein, CNTNAP2, contributes to the organization of axonal domains at nodes of Ranvier by maintaining voltage-gated potassium channels at the juxtaparanodal region. The protein is Contactin-2 (Cntn2) of Mus musculus (Mouse).